The primary structure comprises 191 residues: Calcium-activated potassium channel subunit beta-1 (191 aa).

The Cytoplasmic portion of the chain corresponds to 1 to 18; that stretch reads MVKKLVMAQKRGETRALC. A helical transmembrane segment spans residues 19–39; sequence LGVTMVVCAVITYYILVTTVL. Residues 40-157 are Extracellular-facing; that stretch reads PLYQKSVWTQ…FQRLYGPQAL (118 aa). Residues Asn80 and Asn142 are each glycosylated (N-linked (GlcNAc...) asparagine). Residues 158–178 form a helical membrane-spanning segment; it reads LFSLFWPTFLLTGGLLIIAMV. At 179 to 191 the chain is on the cytoplasmic side; the sequence is KSNQYLSILAAQK.

It belongs to the KCNMB (TC 8.A.14.1) family. KCNMB1 subfamily. In terms of assembly, interacts with KCNMA1 tetramer. There are probably 4 molecules of KCMNB1 per KCNMA1 tetramer. In terms of processing, N-glycosylated. As to expression, abundantly expressed in smooth muscle. Low levels of expression in most other tissues. Within the brain, relatively high levels found in hippocampus and corpus callosum.

The protein resides in the membrane. Its function is as follows. Regulatory subunit of the calcium activated potassium KCNMA1 (maxiK) channel. Modulates the calcium sensitivity and gating kinetics of KCNMA1, thereby contributing to KCNMA1 channel diversity. Increases the apparent Ca(2+)/voltage sensitivity of the KCNMA1 channel. It also modifies KCNMA1 channel kinetics and alters its pharmacological properties. It slows down the activation and the deactivation kinetics of the channel. Acts as a negative regulator of smooth muscle contraction by enhancing the calcium sensitivity to KCNMA1. Its presence is also a requirement for internal binding of the KCNMA1 channel opener dehydrosoyasaponin I (DHS-1) triterpene glycoside and for external binding of the agonist hormone 17-beta-estradiol (E2). Increases the binding activity of charybdotoxin (CTX) toxin to KCNMA1 peptide blocker by increasing the CTX association rate and decreasing the dissociation rate. The polypeptide is Calcium-activated potassium channel subunit beta-1 (KCNMB1) (Homo sapiens (Human)).